A 411-amino-acid chain; its full sequence is Dual-specificity RNA methyltransferase RlmN (411 aa).

Residue Glu-124 is the Proton acceptor of the active site. The Radical SAM core domain maps to 130–379 (EEGRGTLCIS…IRTPRGRDIL (250 aa)). Cys-137 and Cys-382 are disulfide-bonded. [4Fe-4S] cluster contacts are provided by Cys-144, Cys-148, and Cys-151. S-adenosyl-L-methionine contacts are provided by residues 208 to 209 (GE), Ser-240, 262 to 264 (SLH), and Asn-339. Cys-382 acts as the S-methylcysteine intermediate in catalysis.

It belongs to the radical SAM superfamily. RlmN family. It depends on [4Fe-4S] cluster as a cofactor.

The protein resides in the cytoplasm. The enzyme catalyses adenosine(2503) in 23S rRNA + 2 reduced [2Fe-2S]-[ferredoxin] + 2 S-adenosyl-L-methionine = 2-methyladenosine(2503) in 23S rRNA + 5'-deoxyadenosine + L-methionine + 2 oxidized [2Fe-2S]-[ferredoxin] + S-adenosyl-L-homocysteine. It catalyses the reaction adenosine(37) in tRNA + 2 reduced [2Fe-2S]-[ferredoxin] + 2 S-adenosyl-L-methionine = 2-methyladenosine(37) in tRNA + 5'-deoxyadenosine + L-methionine + 2 oxidized [2Fe-2S]-[ferredoxin] + S-adenosyl-L-homocysteine. In terms of biological role, specifically methylates position 2 of adenine 2503 in 23S rRNA and position 2 of adenine 37 in tRNAs. m2A2503 modification seems to play a crucial role in the proofreading step occurring at the peptidyl transferase center and thus would serve to optimize ribosomal fidelity. This is Dual-specificity RNA methyltransferase RlmN from Rhizobium meliloti (strain 1021) (Ensifer meliloti).